The chain runs to 121 residues: Large ribosomal subunit protein bL12 (121 aa).

Belongs to the bacterial ribosomal protein bL12 family. In terms of assembly, homodimer. Part of the ribosomal stalk of the 50S ribosomal subunit. Forms a multimeric L10(L12)X complex, where L10 forms an elongated spine to which 2 to 4 L12 dimers bind in a sequential fashion. Binds GTP-bound translation factors.

Functionally, forms part of the ribosomal stalk which helps the ribosome interact with GTP-bound translation factors. Is thus essential for accurate translation. In Leuconostoc mesenteroides subsp. mesenteroides (strain ATCC 8293 / DSM 20343 / BCRC 11652 / CCM 1803 / JCM 6124 / NCDO 523 / NBRC 100496 / NCIMB 8023 / NCTC 12954 / NRRL B-1118 / 37Y), this protein is Large ribosomal subunit protein bL12.